We begin with the raw amino-acid sequence, 263 residues long: uncharacterized protein (263 aa).

It is found in the mitochondrion. This is an uncharacterized protein from Schizosaccharomyces pombe (strain 972 / ATCC 24843) (Fission yeast).